The following is a 123-amino-acid chain: Large ribosomal subunit protein uL22c (123 aa).

Belongs to the universal ribosomal protein uL22 family. Part of the 50S ribosomal subunit.

It is found in the plastid. Its subcellular location is the chloroplast. This protein binds specifically to 23S rRNA. Functionally, the globular domain of the protein is located near the polypeptide exit tunnel on the outside of the subunit, while an extended beta-hairpin is found that lines the wall of the exit tunnel in the center of the 70S ribosome. The sequence is that of Large ribosomal subunit protein uL22c (rpl22) from Chara vulgaris (Common stonewort).